The following is a 450-amino-acid chain: Flavin-containing monooxygenase FMO GS-OX-like 3 (450 aa).

17-22 serves as a coordination point for FAD; sequence GAGPAG. 215 to 220 contacts NADP(+); the sequence is GNSSSA.

Belongs to the FMO family. It depends on FAD as a cofactor.

Catalyzes the conversion of methylthioalkyl glucosinolates of any chain length into methylsulfinylalkyl glucosinolates. The chain is Flavin-containing monooxygenase FMO GS-OX-like 3 from Arabidopsis thaliana (Mouse-ear cress).